The chain runs to 449 residues: uncharacterized protein (449 aa).

Disordered stretches follow at residues 1 to 58 (MVKR…SLSS) and 71 to 125 (EALE…VVEL). The segment covering 30–46 (KQRDELREKQKRKREDS) has biased composition (basic and acidic residues). The segment covering 103 to 124 (SDDDDDDNEEEDDNGFEDQVVE) has biased composition (acidic residues).

Belongs to the bystin family.

This is an uncharacterized protein from Caenorhabditis elegans.